We begin with the raw amino-acid sequence, 536 residues long: CTP synthase (536 aa).

An amidoligase domain region spans residues 1–267; the sequence is MSKFVFVTGG…CKETLKYLDL (267 aa). Residue S13 coordinates CTP. S13 provides a ligand contact to UTP. ATP contacts are provided by residues 14–19 and D71; that span reads SIGKGI. The Mg(2+) site is built by D71 and E141. CTP-binding positions include 148–150, 188–193, and K224; these read DIE and KTKPTQ. UTP contacts are provided by residues 188 to 193 and K224; that span reads KTKPTQ. In terms of domain architecture, Glutamine amidotransferase type-1 spans 292-534; sequence KVALVGKYIE…IKASQDKLTQ (243 aa). G354 lines the L-glutamine pocket. The active-site Nucleophile; for glutamine hydrolysis is C381. Residues 382–385, E405, and R462 contribute to the L-glutamine site; that span reads LGMQ. Residues H507 and E509 contribute to the active site.

This sequence belongs to the CTP synthase family. In terms of assembly, homotetramer.

It carries out the reaction UTP + L-glutamine + ATP + H2O = CTP + L-glutamate + ADP + phosphate + 2 H(+). It catalyses the reaction L-glutamine + H2O = L-glutamate + NH4(+). The enzyme catalyses UTP + NH4(+) + ATP = CTP + ADP + phosphate + 2 H(+). The protein operates within pyrimidine metabolism; CTP biosynthesis via de novo pathway; CTP from UDP: step 2/2. Allosterically activated by GTP, when glutamine is the substrate; GTP has no effect on the reaction when ammonia is the substrate. The allosteric effector GTP functions by stabilizing the protein conformation that binds the tetrahedral intermediate(s) formed during glutamine hydrolysis. Inhibited by the product CTP, via allosteric rather than competitive inhibition. Its function is as follows. Catalyzes the ATP-dependent amination of UTP to CTP with either L-glutamine or ammonia as the source of nitrogen. Regulates intracellular CTP levels through interactions with the four ribonucleotide triphosphates. The chain is CTP synthase from Prochlorococcus marinus (strain AS9601).